The sequence spans 828 residues: Leucine--tRNA ligase (828 aa).

The short motif at 36–46 (PYPSGKIHIGH) is the 'HIGH' region element. The 'KMSKS' region motif lies at 595 to 599 (KMSKS). Residue Lys-598 participates in ATP binding.

The protein belongs to the class-I aminoacyl-tRNA synthetase family.

The protein localises to the cytoplasm. The catalysed reaction is tRNA(Leu) + L-leucine + ATP = L-leucyl-tRNA(Leu) + AMP + diphosphate. In Rickettsia typhi (strain ATCC VR-144 / Wilmington), this protein is Leucine--tRNA ligase.